Reading from the N-terminus, the 508-residue chain is Aspartic proteinase yapsin-3 (508 aa).

Positions 1 to 20 (MKLQLAAVATLAVLTSPAFG) are cleaved as a signal peptide. Positions 21–47 (RVLPDGKYVKIPFTKKKNGDNGELSKR) are excised as a propeptide. A Peptidase A1 domain is found at 63-394 (YSVELAIGTP…DLDNYEISLA (332 aa)). The N-linked (GlcNAc...) asparagine glycan is linked to Asn75. The active site involves Asp81. N-linked (GlcNAc...) asparagine glycans are attached at residues Asn120, Asn160, Asn163, and Asn275. Residue Asp288 is part of the active site. Asn309, Asn328, Asn367, Asn422, Asn445, and Asn462 each carry an N-linked (GlcNAc...) asparagine glycan. The segment covering 448–468 (STATTTRSTTTKKTNSTTTAK) has biased composition (low complexity). The segment at 448-476 (STATTTRSTTTKKTNSTTTAKSTHKSKRA) is disordered. The GPI-anchor amidated asparagine moiety is linked to residue Asn483. Residues 484–508 (SASSIRSTLGLLLVPSLLILSVFFS) constitute a propeptide, removed in mature form.

The protein belongs to the peptidase A1 family. Can also be processed to start at Phe-54.

Its subcellular location is the cell membrane. Its function is as follows. Cleaves proteins C-terminally to mono- and paired-basic residues. Required for cell wall integrity. The protein is Aspartic proteinase yapsin-3 (YPS3) of Saccharomyces cerevisiae (strain ATCC 204508 / S288c) (Baker's yeast).